The sequence spans 115 residues: MIVGIGVDVVDIERFGRQLERTPGLRDRLFVPAERELNTRSLAARFAAKEAVAKVLGAPAGMNWQDCWIGLDHNGPTVQVKGTVLAVAEAKGVKRWHLSISHDGGIATATVLAEG.

Residues aspartate 8 and glutamate 50 each contribute to the Mg(2+) site.

The protein belongs to the P-Pant transferase superfamily. AcpS family. The cofactor is Mg(2+).

It localises to the cytoplasm. It carries out the reaction apo-[ACP] + CoA = holo-[ACP] + adenosine 3',5'-bisphosphate + H(+). In terms of biological role, transfers the 4'-phosphopantetheine moiety from coenzyme A to a Ser of acyl-carrier-protein. The sequence is that of Holo-[acyl-carrier-protein] synthase from Pseudarthrobacter chlorophenolicus (strain ATCC 700700 / DSM 12829 / CIP 107037 / JCM 12360 / KCTC 9906 / NCIMB 13794 / A6) (Arthrobacter chlorophenolicus).